The primary structure comprises 454 residues: Mogroside I-E synthase (454 aa).

His18 serves as the catalytic Proton acceptor. Residue His18 coordinates an anthocyanidin. The Charge relay role is filled by Asp111. His144 is a binding site for an anthocyanidin. Cys259 and Cys331 are oxidised to a cystine. Ser278, Cys331, Gln333, Trp351, Asn352, Ser353, and Glu356 together coordinate UDP-alpha-D-glucose. An an anthocyanidin-binding site is contributed by Ala371. UDP-alpha-D-glucose-binding residues include Asp372 and Gln373.

The protein belongs to the UDP-glycosyltransferase family. As to expression, highly expressed in young fruits 15 days after anthesis (15-DAA).

It catalyses the reaction mogrol + UDP-alpha-D-glucose = mogroside IE + UDP + H(+). The protein operates within secondary metabolite biosynthesis; terpenoid biosynthesis. Its activity is regulated as follows. Activity is increased by Mg(2+). In terms of biological role, UDP-glycosyltransferase involved in the biosynthesis of cucurbitacin and mogroside tetracyclic triterpene natural products (e.g. siamenoside I and mogrosides IV, V and VI). Cucurbitacins have cytotoxic properties and exhibit deterrent taste as a defense barrier against herbivores. Mogrosides are nonsugar highly oxygenated compounds used as high-intensity zero-calorie sweeteners; they also possess pharmacological properties such as regulating immunity, lowering blood sugar and lipid levels, protecting the liver, and acting as antioxidants and antitumor agents. Catalyzes the transfer of a glucose moiety to the C-3 hydroxyl of mogrol to form mogroside I-E. Besides mogrol, UGT74AC1 also shows activity in vitro with quercetin and naringenin as substrate. The polypeptide is Mogroside I-E synthase (Siraitia grosvenorii (Monk's fruit)).